Reading from the N-terminus, the 517-residue chain is Protein disulfide isomerase-like 1-2 (517 aa).

The signal sequence occupies residues 1 to 23; it reads MAVNLVLSFALAILISSSPTAVG. The Thioredoxin 1 domain occupies 24–143; the sequence is VDATEELKEA…IVEYLKRQVG (120 aa). A glycan (N-linked (GlcNAc...) asparagine) is linked at Asn41. Active-site nucleophile residues include Cys61 and Cys64. Residues Cys61 and Cys64 are joined by a disulfide bond. Asn301 carries an N-linked (GlcNAc...) asparagine glycan. The Thioredoxin 2 domain maps to 357 to 484; the sequence is VEYGNLTPYV…IISFINENRG (128 aa). Active-site nucleophile residues include Cys407 and Cys410. A disulfide bridge connects residues Cys407 and Cys410. Positions 514–517 match the Prevents secretion from ER motif; that stretch reads KDEL.

It belongs to the protein disulfide isomerase family.

Its subcellular location is the endoplasmic reticulum lumen. The enzyme catalyses Catalyzes the rearrangement of -S-S- bonds in proteins.. Acts as a protein-folding catalyst that interacts with nascent polypeptides to catalyze the formation, isomerization, and reduction or oxidation of disulfide bonds. May play a role in storage protein biogenesis. This chain is Protein disulfide isomerase-like 1-2 (PDIL1-2), found in Oryza sativa subsp. japonica (Rice).